Here is a 321-residue protein sequence, read N- to C-terminus: uncharacterized protein (321 aa).

Topologically, residues 1-6 (MDIIRK) are extracellular. Residues 7 to 29 (ISHFAGQTFGIWVIVFAVLGFSF) form a helical membrane-spanning segment. Residues 30–34 (PSLFT) are Cytoplasmic-facing. A helical transmembrane segment spans residues 35–57 (WISSYITIFLGIIMFGMGLTLQA). Residues 58–69 (DDFKELVRKPWQ) are Extracellular-facing. The helical transmembrane segment at 70 to 92 (VIIGVIAQYTIMPLVAFGLAFGL) threads the bilayer. Residues 93-97 (HLPAE) lie on the Cytoplasmic side of the membrane. Residues 98–120 (IAVGVILVGCCPGGTASNVMTFL) form a helical membrane-spanning segment. Topologically, residues 121–129 (AKGNTALSV) are extracellular. The helical transmembrane segment at 130 to 150 (AVTTISTLLAPVVTPLLIMLF) threads the bilayer. The Cytoplasmic portion of the chain corresponds to 151–159 (AKEWLPVSP). Residues 160-180 (GSLFISILQAVLFPIIAGLIV) form a helical membrane-spanning segment. At 181-190 (KMFFRKQVAK) the chain is on the extracellular side. The helical transmembrane segment at 191 to 211 (AVHALPLVSVIGIVAIVSAVV) threads the bilayer. At 212 to 221 (SGNRENLLQS) the chain is on the cytoplasmic side. Residues 222-242 (GLLIFSVVILHNGIGYLLGFL) form a helical membrane-spanning segment. The Extracellular segment spans residues 243–267 (CAKLLKMDYPSQKAIAIEVGMQNSG). A helical membrane pass occupies residues 268-288 (LGAALATAHFSPLSAVPSAIF). Residues 289–321 (SVWHNLSGSMLATYWSKKVKKKQAGSKSSNLSL) are Cytoplasmic-facing.

It belongs to the bile acid:sodium symporter (BASS) (TC 2.A.28) family.

The protein resides in the cell membrane. This is an uncharacterized protein from Bacillus subtilis (strain 168).